The following is a 162-amino-acid chain: Austinoid biosynthesis clusters protein J (162 aa).

This sequence belongs to the trt14 isomerase family. In terms of assembly, homodimer.

The protein operates within secondary metabolite biosynthesis; terpenoid biosynthesis. Its function is as follows. Part of the gene cluster B that mediates the biosynthesis of austinol and dehydroaustinol, two fungal meroterpenoids. The first step of the pathway is the synthesis of 3,5-dimethylorsellinic acid by the polyketide synthase ausA. 3,5-dimethylorsellinic acid is then prenylated by the polyprenyl transferase ausN. Further epoxidation by the FAD-dependent monooxygenase ausM and cyclization by the probable terpene cyclase ausL lead to the formation of protoaustinoid A. Protoaustinoid A is then oxidized to spiro-lactone preaustinoid A3 by the combined action of the FAD-binding monooxygenases ausB and ausC, and the dioxygenase ausE. Acid-catalyzed keto-rearrangement and ring contraction of the tetraketide portion of preaustinoid A3 by ausJ lead to the formation of preaustinoid A4. The aldo-keto reductase ausK, with the help of ausH, is involved in the next step by transforming preaustinoid A4 into isoaustinone which is in turn hydroxylated by the P450 monooxygenase ausI to form austinolide. Finally, the cytochrome P450 monooxygenase ausG modifies austinolide to austinol. Austinol can be further modified to dehydroaustinol which forms a diffusible complex with diorcinol that initiates conidiation. Due to genetic rearrangements of the clusters and the subsequent loss of some enzymes, the end products of the Emericella nidulans austinoid biosynthesis clusters are austinol and dehydroaustinol, even if additional enzymes, such as the O-acetyltransferase ausQ and the cytochrome P450 monooxygenase ausR are still functional. The protein is Austinoid biosynthesis clusters protein J of Emericella nidulans (strain FGSC A4 / ATCC 38163 / CBS 112.46 / NRRL 194 / M139) (Aspergillus nidulans).